The primary structure comprises 91 residues: DNA-binding protein HU-beta 2 (91 aa).

The protein belongs to the bacterial histone-like protein family.

Its function is as follows. Histone-like DNA-binding protein which is capable of wrapping DNA to stabilize it, and thus to prevent its denaturation under extreme environmental conditions. The chain is DNA-binding protein HU-beta 2 (hupB2) from Neisseria meningitidis serogroup A / serotype 4A (strain DSM 15465 / Z2491).